The primary structure comprises 448 residues: Methionine aminopeptidase 2 (448 aa).

Residues 1–94 are disordered; sequence MAAQVTDALK…PRVLLSNLFP (94 aa). A compositionally biased stretch (acidic residues) spans 37–50; that stretch reads AEAEDSDDDDEEPV. A compositionally biased stretch (basic residues) spans 61 to 74; that stretch reads KKKRKRKKKPKKKA. Residue histidine 201 coordinates substrate. Residues aspartate 221, aspartate 232, and histidine 301 each coordinate a divalent metal cation. Position 309 (histidine 309) interacts with substrate. Glutamate 334 and glutamate 429 together coordinate a divalent metal cation.

Belongs to the peptidase M24A family. Methionine aminopeptidase eukaryotic type 2 subfamily. It depends on Co(2+) as a cofactor. Requires Zn(2+) as cofactor. Mn(2+) serves as cofactor. The cofactor is Fe(2+).

Its subcellular location is the cytoplasm. The enzyme catalyses Release of N-terminal amino acids, preferentially methionine, from peptides and arylamides.. Its function is as follows. Cotranslationally removes the N-terminal methionine from nascent proteins. The N-terminal methionine is often cleaved when the second residue in the primary sequence is small and uncharged (Met-Ala-, Cys, Gly, Pro, Ser, Thr, or Val). The chain is Methionine aminopeptidase 2 from Botryotinia fuckeliana (strain B05.10) (Noble rot fungus).